The chain runs to 677 residues: MSHASAAQQIESLRESIRHHEYLYYVQDQPEIDDLAFDELMRKLQRLEAEHPELITPDSPTQRVGGKPKEGFAKVAHSRPMLSLDNVNSEEELRDWERRVREQAGQNAEIEYVCEYKLDGLSMALHYRDGQLARGLTRGDGEIGEDVTTNVRTIRSVPLSIADGKLQQAKMPANFEVRGEVVMPFTAFEKLNEEREAQGLAPAANPRNAAAGTIRTLEPNIVAQRRLDFYAYFALTEKGEDAFGEQEEALDALATLGFRVNQHRHAAKSIETVVEFVNRAEEHRSRLGYEIDGVVVKVNSAVLQRRLGYTGRAPRWAVAYKFAARSGVTQVEDIQVQVGRTGKLTPVAWLAPVQVGGTTVTRATLHNADEIERLGLRIGDFVRIERGGDVIPKVVEVVDDAEHPRGTKHFHFPHACPACGSEVVRTPGEADYRCVNTDCPARLRESLLHFASRGVMNIEGMGEAIVMQLLGRGLVKTVSDIYSLTEEQLVSLERMGKKSATALLGEIDKSRQAPLDRVLFGLGIRFVGERTAQALAEEYGSMDALMQASREELERVNDVGPRVSEAIREFFDEPRNRDLVERLREAGLRFTGEKRKKTSQLAGLTFVLTGTLPGLSRDEAKGKIENAGGHVSGSVSKKTNYVVAGADAGSKLEKANSLGVPVIDEAALIKMLETEQA.

Residues 34–38 (DLAFD), 83–84 (SL), and glutamate 115 each bind NAD(+). The active-site N6-AMP-lysine intermediate is the lysine 117. The NAD(+) site is built by arginine 138, glutamate 180, lysine 297, and lysine 321. Zn(2+) is bound by residues cysteine 416, cysteine 419, cysteine 434, and cysteine 439. The BRCT domain maps to 596–677 (KKTSQLAGLT…LIKMLETEQA (82 aa)).

The protein belongs to the NAD-dependent DNA ligase family. LigA subfamily. Mg(2+) is required as a cofactor. Requires Mn(2+) as cofactor.

It carries out the reaction NAD(+) + (deoxyribonucleotide)n-3'-hydroxyl + 5'-phospho-(deoxyribonucleotide)m = (deoxyribonucleotide)n+m + AMP + beta-nicotinamide D-nucleotide.. Its function is as follows. DNA ligase that catalyzes the formation of phosphodiester linkages between 5'-phosphoryl and 3'-hydroxyl groups in double-stranded DNA using NAD as a coenzyme and as the energy source for the reaction. It is essential for DNA replication and repair of damaged DNA. This is DNA ligase from Acidobacterium capsulatum (strain ATCC 51196 / DSM 11244 / BCRC 80197 / JCM 7670 / NBRC 15755 / NCIMB 13165 / 161).